The following is a 440-amino-acid chain: Tetratricopeptide repeat protein 5 (440 aa).

TPR repeat units lie at residues 7-61, 68-98, 103-130, 136-174, and 179-216; these read EEAK…EEVL, AQAL…AVKL, VEAW…SGAL, KVSL…AVQM, and GRSW…AEKV. Residues 13 to 24 carry the Nuclear export signal motif; sequence LQKLQGLVDRLY. Serine 203 carries the phosphoserine; by ATM modification. Residue serine 221 is modified to Phosphoserine; by CHEK2. The TPR 6 repeat unit spans residues 224-253; the sequence is PDLHLNRATLHKYEESYGEALEGFSQAAAL. The interval 285–287 is mediates interaction with 28S rRNA of ribosome-coding tubulin; the sequence is KPK.

In terms of assembly, interacts with JMY and p300/EP300; the interaction occurs in the nucleus and augments the association between JMY and p300/EP300 in response to DNA damage. Interacts with PRMT5; the interaction is DNA damage-dependent and promotes PRMT5 interaction with p53/TP53 and subsequent methylation. Forms a complex with HSF1 and p300/EP300; these interactions augment chromatin-bound HSF1 and p300/EP300 histone acetyltransferase activity, resulting in enhanced heat-shock-responsive transcription. Interacts with JMY; the interaction occurs in the cytoplasm and results in the inhibition of JYM's nucleation activity. Interacts with ribosome-coding tubulin (via 60S subunit 28S rRNA and protein uL24/RPL26) and the N-terminal of nascent tubulin polypeptide (via alpha-tubulin MREC motif and beta-tubulin MREI motif); these interactions result in tubulin mRNA-targeted degradation. Interacts with ATP5F1B; the interaction occurs in the mitochondria and results in ATP production decrease. Interacts with p53/TP53; the interaction occurs in the mitochondria and results in increased apoptosis. In terms of processing, phosphorylation by ATM kinase induces nuclear accumulation while interfering with nuclear export, and phosphorylation by CHEK2 kinase enhances nuclear stability. In terms of tissue distribution, expressed in heart, brain, spleen, lung, liver, skeletal muscle, kidney and testis.

It is found in the nucleus. Its subcellular location is the cytoplasm. The protein localises to the cytoplasmic vesicle. It localises to the mitochondrion matrix. Functionally, cofactor involved in the regulation of various cellular mechanisms such as actin regulation, autophagy, chromatin regulation and DNA repair. In physiological conditions, interacts with cofactor JMY in the cytoplasm which prevents JMY's actin nucleation activity and ability to activate the Arp2/3 complex. Acts as a negative regulator of nutrient stress-induced autophagy by inhibiting JMY's interaction with MAP1LC3B, thereby preventing autophagosome formation. Involves in tubulin autoregulation by promoting its degradation in response to excess soluble tubulin. To do so, associates with the active ribosome near the ribosome exit tunnel and with nascent tubulin polypeptides early during their translation, triggering tubulin mRNA-targeted degradation. Following DNA damage, phosphorylated by DNA damage responsive protein kinases ATM and CHEK2, leading to its nuclear accumulation and stability. Nuclear TTC5/STRAP promotes the assembly of a stress-responsive p53/TP53 coactivator complex, which includes the coactivators JMY and p300, thereby increasing p53/TP53-dependent transcription and apoptosis. Also recruits arginine methyltransferase PRMT5 to p53/TP53 when DNA is damaged, allowing PRMT5 to methylate p53/TP53. In DNA stress conditions, also prevents p53/TP53 degradation by E3 ubiquitin ligase MDM2. Upon heat-shock stress, forms a chromatin-associated complex with heat-shock factor 1 HSF1 and p300/EP300 to stimulate heat-shock-responsive transcription, thereby increasing cell survival. Mitochondrial TTC5/STRAP interacts with ATP synthase subunit beta ATP5F1B which decreased ATP synthase activity and lowers mitochondrial ATP production, thereby regulating cellular respiration and mitochondrial-dependent apoptosis. Mitochondrial TTC5/STRAP also regulates p53/TP53-mediated apoptosis. This is Tetratricopeptide repeat protein 5 from Mus musculus (Mouse).